Consider the following 21-residue polypeptide: DYE-linked aldehyde dehydrogenase, gamma chain (21 aa).

In terms of assembly, heterotetramer composed of an alpha, a beta and two gamma chains. Requires [2Fe-2S] cluster as cofactor.

In terms of biological role, active with aldehydes and formate esters as substrates. The polypeptide is DYE-linked aldehyde dehydrogenase, gamma chain (Amycolatopsis methanolica).